Consider the following 441-residue polypeptide: uncharacterized protein (441 aa).

This is an uncharacterized protein from Ictalurid herpesvirus 1 (strain Auburn) (IcHV-1).